A 101-amino-acid polypeptide reads, in one-letter code: Ubiquitin-related modifier 1 (101 aa).

At G101 the chain carries 1-thioglycine. A Glycyl lysine isopeptide (Gly-Lys) (interchain with K-? in acceptor proteins) cross-link involves residue G101.

This sequence belongs to the URM1 family. C-terminal thiocarboxylation occurs in 2 steps, it is first acyl-adenylated (-COAMP) via the hesA/moeB/thiF part of UBA4, then thiocarboxylated (-COSH) via the rhodanese domain of UBA4.

The protein resides in the cytoplasm. It functions in the pathway tRNA modification; 5-methoxycarbonylmethyl-2-thiouridine-tRNA biosynthesis. Functionally, acts as a sulfur carrier required for 2-thiolation of mcm(5)S(2)U at tRNA wobble positions of cytosolic tRNA(Lys), tRNA(Glu) and tRNA(Gln). Serves as sulfur donor in tRNA 2-thiolation reaction by being thiocarboxylated (-COSH) at its C-terminus by the MOCS3 homolog UBA4. The sulfur is then transferred to tRNA to form 2-thiolation of mcm(5)S(2)U. Prior mcm(5) tRNA modification by the elongator complex is required for 2-thiolation. Also acts as a ubiquitin-like protein (UBL) that is covalently conjugated via an isopeptide bond to lysine residues of target proteins such as AHP1. The thiocarboxylated form serves as substrate for conjugation and oxidative stress specifically induces the formation of UBL-protein conjugates. The protein is Ubiquitin-related modifier 1 of Candida albicans (strain SC5314 / ATCC MYA-2876) (Yeast).